Here is a 176-residue protein sequence, read N- to C-terminus: ATP synthase subunit b (176 aa).

The helical transmembrane segment at 24–43 (FAFRVVNFVIFAGIIWKAAG) threads the bilayer.

The protein belongs to the ATPase B chain family. As to quaternary structure, F-type ATPases have 2 components, F(1) - the catalytic core - and F(0) - the membrane proton channel. F(1) has five subunits: alpha(3), beta(3), gamma(1), delta(1), epsilon(1). F(0) has three main subunits: a(1), b(2) and c(10-14). The alpha and beta chains form an alternating ring which encloses part of the gamma chain. F(1) is attached to F(0) by a central stalk formed by the gamma and epsilon chains, while a peripheral stalk is formed by the delta and b chains.

Its subcellular location is the cell inner membrane. F(1)F(0) ATP synthase produces ATP from ADP in the presence of a proton or sodium gradient. F-type ATPases consist of two structural domains, F(1) containing the extramembraneous catalytic core and F(0) containing the membrane proton channel, linked together by a central stalk and a peripheral stalk. During catalysis, ATP synthesis in the catalytic domain of F(1) is coupled via a rotary mechanism of the central stalk subunits to proton translocation. Its function is as follows. Component of the F(0) channel, it forms part of the peripheral stalk, linking F(1) to F(0). The sequence is that of ATP synthase subunit b from Nitratidesulfovibrio vulgaris (strain ATCC 29579 / DSM 644 / CCUG 34227 / NCIMB 8303 / VKM B-1760 / Hildenborough) (Desulfovibrio vulgaris).